The primary structure comprises 362 residues: Cobalt-precorrin-5B C(1)-methyltransferase (362 aa).

It belongs to the CbiD family.

The enzyme catalyses Co-precorrin-5B + S-adenosyl-L-methionine = Co-precorrin-6A + S-adenosyl-L-homocysteine. The protein operates within cofactor biosynthesis; adenosylcobalamin biosynthesis; cob(II)yrinate a,c-diamide from sirohydrochlorin (anaerobic route): step 6/10. Its function is as follows. Catalyzes the methylation of C-1 in cobalt-precorrin-5B to form cobalt-precorrin-6A. This chain is Cobalt-precorrin-5B C(1)-methyltransferase, found in Methanocaldococcus jannaschii (strain ATCC 43067 / DSM 2661 / JAL-1 / JCM 10045 / NBRC 100440) (Methanococcus jannaschii).